The chain runs to 231 residues: 7-cyano-7-deazaguanine synthase (231 aa).

8 to 18 provides a ligand contact to ATP; that stretch reads FSGGQDSTTCL. Residues cysteine 188, cysteine 197, cysteine 200, and cysteine 203 each coordinate Zn(2+).

It belongs to the QueC family. Zn(2+) serves as cofactor.

The catalysed reaction is 7-carboxy-7-deazaguanine + NH4(+) + ATP = 7-cyano-7-deazaguanine + ADP + phosphate + H2O + H(+). The protein operates within purine metabolism; 7-cyano-7-deazaguanine biosynthesis. Its function is as follows. Catalyzes the ATP-dependent conversion of 7-carboxy-7-deazaguanine (CDG) to 7-cyano-7-deazaguanine (preQ(0)). The polypeptide is 7-cyano-7-deazaguanine synthase (Shigella dysenteriae serotype 1 (strain Sd197)).